Here is a 1037-residue protein sequence, read N- to C-terminus: MDRMASSMKQVPNPLPKVLSRRGVGAGLEAAERESFERTQTVSINKAINTQEVAVKEKHARTCILGTHHEKGAQTFWSVVNRLPLSSNAVLCWKFCHVFHKLLRDGHPNVLKDSLRYRNELSDMSRMWGHLSEGYGQLCSIYLKLLRTKMEYHTKNPRFPGNLQMSDRQLDEAGESDVNNFFQLTVEMFDYLECELNLFQTVFNSLDMSRSVSVTAAGQCRLAPLIQVILDCSHLYDYTVKLLFKLHSCLPADTLQGHRDRFMEQFTKLKDLFYRSSNLQYFKRLIQIPQLPENPPNFLRASALSEHISPVVVIPAEASSPDSEPVLEKDDLMDMDASQQNLFDNKFDDIFGSSFSSDPFNFNSQNGVNKDEKDHLIERLYREISGLKAQLENMKTESQRVVLQLKGHVSELEADLAEQQHLRQQAADDCEFLRAELDELRRQREDTEKAQRSLSEIERKAQANEQRYSKLKEKYSELVQNHADLLRKNAEVTKQVSMARQAQVDLEREKKELEDSLERISDQGQRKTQEQLEVLESLKQELATSQRELQVLQGSLETSAQSEANWAAEFAELEKERDSLVSGAAHREEELSALRKELQDTQLKLASTEESMCQLAKDQRKMLLVGSRKAAEQVIQDALNQLEEPPLISCAGSADHLLSTVTSISSCIEQLEKSWSQYLACPEDISGLLHSITLLAHLTSDAIAHGATTCLRAPPEPADSLTEACKQYGRETLAYLASLEEEGSLENADSTAMRNCLSKIKAIGEELLPRGLDIKQEELGDLVDKEMAATSAAIETATARIEEMLSKSRAGDTGVKLEVNERILGCCTSLMQAIQVLIVASKDLQREIVESGRGTASPKEFYAKNSRWTEGLISASKAVGWGATVMVDAADLVVQGRGKFEELMVCSHEIAASTAQLVAASKVKADKDSPNLAQLQQASRGVNQATAGVVASTISGKSQIEETDNMDFSSMTLTQIKRQEMDSQVRVLELENELQKERQKLGELRKKHYELAGVAEGWEEGTEASPPTLQEVVTEKE.

Residues 32-160 (ERESFERTQT…EYHTKNPRFP (129 aa)) form the ENTH domain. A Phosphoserine modification is found at Ser338. The stretch at 368-644 (VNKDEKDHLI…IQDALNQLEE (277 aa)) forms a coiled coil. The pDED stretch occupies residues 410 to 491 (SELEADLAEQ…HADLLRKNAE (82 aa)). Residues 771-1012 (GLDIKQEELG…ELRKKHYELA (242 aa)) form the I/LWEQ domain. Residues 867–924 (RWTEGLISASKAVGWGATVMVDAADLVVQGRGKFEELMVCSHEIAASTAQLVAASKVK) are important for actin binding. Positions 1017 to 1037 (GWEEGTEASPPTLQEVVTEKE) are disordered.

It belongs to the SLA2 family. In terms of assembly, homodimer. Binds actin. Binds HTT (via N-terminus). This interaction is restricted to the brain. Binds to IFT57. In normal conditions, it poorly interacts with IFT57, HIP1 being strongly associated with HTT. However, in mutant HTT proteins with a long poly-Gln region, interaction between HTT and HIP1 is inhibited, promoting the interaction between HIP1 and IFT57. Interacts with CLTB (via N-terminus). Interacts (via coiled coil domain) with AR. Interacts with AP2A1, AP2A2, CLTC and HIP1R. Interacts with GRIA1, GRIN2A and GRIN2B. In terms of tissue distribution, ubiquitously expressed with the highest level in brain. Expression is up-regulated in prostate and colon cancer.

It is found in the cytoplasm. The protein resides in the nucleus. It localises to the endomembrane system. The protein localises to the cytoplasmic vesicle. Its subcellular location is the clathrin-coated vesicle membrane. In terms of biological role, plays a role in clathrin-mediated endocytosis and trafficking. Involved in regulating AMPA receptor trafficking in the central nervous system in an NMDA-dependent manner. Regulates presynaptic nerve terminal activity. Enhances androgen receptor (AR)-mediated transcription. May act as a proapoptotic protein that induces cell death by acting through the intrinsic apoptosis pathway. Binds 3-phosphoinositides (via ENTH domain). May act through the ENTH domain to promote cell survival by stabilizing receptor tyrosine kinases following ligand-induced endocytosis. May play a functional role in the cell filament networks. May be required for differentiation, proliferation, and/or survival of somatic and germline progenitors. This is Huntingtin-interacting protein 1 (HIP1) from Homo sapiens (Human).